The following is a 384-amino-acid chain: Methylthioribose-1-phosphate isomerase (384 aa).

Asp255 functions as the Proton donor in the catalytic mechanism.

It belongs to the eIF-2B alpha/beta/delta subunits family. MtnA subfamily.

It is found in the cytoplasm. It localises to the nucleus. It carries out the reaction 5-(methylsulfanyl)-alpha-D-ribose 1-phosphate = 5-(methylsulfanyl)-D-ribulose 1-phosphate. The protein operates within amino-acid biosynthesis; L-methionine biosynthesis via salvage pathway; L-methionine from S-methyl-5-thio-alpha-D-ribose 1-phosphate: step 1/6. In terms of biological role, catalyzes the interconversion of methylthioribose-1-phosphate (MTR-1-P) into methylthioribulose-1-phosphate (MTRu-1-P). This Talaromyces marneffei (strain ATCC 18224 / CBS 334.59 / QM 7333) (Penicillium marneffei) protein is Methylthioribose-1-phosphate isomerase (mri1).